A 476-amino-acid polypeptide reads, in one-letter code: Aspartyl/glutamyl-tRNA(Asn/Gln) amidotransferase subunit B (476 aa).

Belongs to the GatB/GatE family. GatB subfamily. In terms of assembly, heterotrimer of A, B and C subunits.

It carries out the reaction L-glutamyl-tRNA(Gln) + L-glutamine + ATP + H2O = L-glutaminyl-tRNA(Gln) + L-glutamate + ADP + phosphate + H(+). The enzyme catalyses L-aspartyl-tRNA(Asn) + L-glutamine + ATP + H2O = L-asparaginyl-tRNA(Asn) + L-glutamate + ADP + phosphate + 2 H(+). Its function is as follows. Allows the formation of correctly charged Asn-tRNA(Asn) or Gln-tRNA(Gln) through the transamidation of misacylated Asp-tRNA(Asn) or Glu-tRNA(Gln) in organisms which lack either or both of asparaginyl-tRNA or glutaminyl-tRNA synthetases. The reaction takes place in the presence of glutamine and ATP through an activated phospho-Asp-tRNA(Asn) or phospho-Glu-tRNA(Gln). This Lactobacillus delbrueckii subsp. bulgaricus (strain ATCC 11842 / DSM 20081 / BCRC 10696 / JCM 1002 / NBRC 13953 / NCIMB 11778 / NCTC 12712 / WDCM 00102 / Lb 14) protein is Aspartyl/glutamyl-tRNA(Asn/Gln) amidotransferase subunit B.